A 415-amino-acid polypeptide reads, in one-letter code: ATP-dependent RNA helicase RhlB (415 aa).

The Q motif motif lies at 9–37 (QRFSALPLHPIVRGALAKKGFDFCTPIQA). The Helicase ATP-binding domain maps to 40 to 218 (LPISLNGRDV…FEDMNDPEYI (179 aa)). 53–60 (AQTGTGKT) contacts ATP. Positions 164 to 167 (DEAD) match the DEAD box motif. In terms of domain architecture, Helicase C-terminal spans 241-389 (DKMALLLTLM…VSQYETEALL (149 aa)).

Belongs to the DEAD box helicase family. RhlB subfamily. In terms of assembly, component of the RNA degradosome, which is a multiprotein complex involved in RNA processing and mRNA degradation.

It is found in the cytoplasm. It catalyses the reaction ATP + H2O = ADP + phosphate + H(+). DEAD-box RNA helicase involved in RNA degradation. Has RNA-dependent ATPase activity and unwinds double-stranded RNA. The sequence is that of ATP-dependent RNA helicase RhlB from Haemophilus influenzae (strain PittGG).